The primary structure comprises 221 residues: Ras-related protein Rab-27A (221 aa).

Serine 2 is modified (N-acetylserine). At serine 2 the chain carries Phosphoserine. 16 to 24 is a GTP binding site; the sequence is GDSGVGKTS. The Effector region signature appears at 38–46; it reads FITTVGIDF. GTP contacts are provided by residues 74–78, 133–136, and 163–165; these read DTAGQ, NKSD, and SAA. A disulfide bond links cysteine 123 and cysteine 188. S-geranylgeranyl cysteine attachment occurs at residues cysteine 219 and cysteine 221. Cysteine 221 is subject to Cysteine methyl ester.

This sequence belongs to the small GTPase superfamily. Rab family. In terms of assembly, binds SYTL1, SLAC2B, MYRIP, SYTL3, SYTL4 and SYTL5. Interacts with RPH3A and RPH3A. Binds MLPH and SYTL2. Interacts with UNC13D. Does not interact with the BLOC-3 complex (heterodimer of HPS1 and HPS4). Interacts (GDP-bound form preferentially) with DENND10. In terms of tissue distribution, found in all the examined tissues except in brain. Low expression was found in thymus, kidney, muscle and placenta. Detected in melanocytes, and in most tumor cell lines examined. Expressed in cytotoxic T-lymphocytes (CTL) and mast cells.

The protein localises to the membrane. It localises to the melanosome. Its subcellular location is the late endosome. It is found in the lysosome. It carries out the reaction GTP + H2O = GDP + phosphate + H(+). With respect to regulation, regulated by guanine nucleotide exchange factors (GEFs) which promote the exchange of bound GDP for free GTP, GTPase activating proteins (GAPs) which increase the GTP hydrolysis activity, and GDP dissociation inhibitors which inhibit the dissociation of the nucleotide from the GTPase. Activated by GEFs such as DENND10. In terms of biological role, small GTPase which cycles between active GTP-bound and inactive GDP-bound states. In its active state, binds to a variety of effector proteins to regulate homeostasis of late endocytic pathway, including endosomal positioning, maturation and secretion. Plays a role in cytotoxic granule exocytosis in lymphocytes. Required for both granule maturation and granule docking and priming at the immunologic synapse. In Homo sapiens (Human), this protein is Ras-related protein Rab-27A (RAB27A).